The primary structure comprises 337 residues: Anthranilate phosphoribosyltransferase (337 aa).

5-phospho-alpha-D-ribose 1-diphosphate contacts are provided by residues Gly79, 82 to 83, Thr87, 89 to 92, 107 to 115, and Ser119; these read GD, NVST, and KHGNRSVSS. Gly79 serves as a coordination point for anthranilate. Residue Ser91 participates in Mg(2+) binding. Asn110 contributes to the anthranilate binding site. Residue Arg165 coordinates anthranilate. 2 residues coordinate Mg(2+): Asp223 and Glu224.

Belongs to the anthranilate phosphoribosyltransferase family. In terms of assembly, homodimer. Mg(2+) serves as cofactor.

It catalyses the reaction N-(5-phospho-beta-D-ribosyl)anthranilate + diphosphate = 5-phospho-alpha-D-ribose 1-diphosphate + anthranilate. It participates in amino-acid biosynthesis; L-tryptophan biosynthesis; L-tryptophan from chorismate: step 2/5. Functionally, catalyzes the transfer of the phosphoribosyl group of 5-phosphorylribose-1-pyrophosphate (PRPP) to anthranilate to yield N-(5'-phosphoribosyl)-anthranilate (PRA). This Aeromonas salmonicida (strain A449) protein is Anthranilate phosphoribosyltransferase.